Here is a 191-residue protein sequence, read N- to C-terminus: Large ribosomal subunit protein bL9 (191 aa).

Residues 150 to 191 (EAERQAKGESLTSADAIYGVDEDALRPEDFFDPDADRDGDDE) form a disordered region. The span at 179-191 (FFDPDADRDGDDE) shows a compositional bias: acidic residues.

Belongs to the bacterial ribosomal protein bL9 family.

Functionally, binds to the 23S rRNA. The polypeptide is Large ribosomal subunit protein bL9 (Allorhizobium ampelinum (strain ATCC BAA-846 / DSM 112012 / S4) (Agrobacterium vitis (strain S4))).